A 335-amino-acid polypeptide reads, in one-letter code: Holliday junction branch migration complex subunit RuvB (335 aa).

Residues 4-184 (ADRIISGQAK…FGIVQRLEFY (181 aa)) are large ATPase domain (RuvB-L). ATP contacts are provided by residues isoleucine 23, arginine 24, glycine 65, lysine 68, threonine 69, threonine 70, 131-133 (EDY), arginine 174, tyrosine 184, and arginine 221. Threonine 69 is a Mg(2+) binding site. The segment at 185 to 255 (SVEDLTSIVA…VAKQALSMLD (71 aa)) is small ATPAse domain (RuvB-S). Residues 258 to 335 (DAGFDYLDRK…RHFGLQKLSD (78 aa)) are head domain (RuvB-H). Residues arginine 294, arginine 313, and arginine 318 each coordinate DNA.

The protein belongs to the RuvB family. Homohexamer. Forms an RuvA(8)-RuvB(12)-Holliday junction (HJ) complex. HJ DNA is sandwiched between 2 RuvA tetramers; dsDNA enters through RuvA and exits via RuvB. An RuvB hexamer assembles on each DNA strand where it exits the tetramer. Each RuvB hexamer is contacted by two RuvA subunits (via domain III) on 2 adjacent RuvB subunits; this complex drives branch migration. In the full resolvosome a probable DNA-RuvA(4)-RuvB(12)-RuvC(2) complex forms which resolves the HJ.

It localises to the cytoplasm. It catalyses the reaction ATP + H2O = ADP + phosphate + H(+). Functionally, the RuvA-RuvB-RuvC complex processes Holliday junction (HJ) DNA during genetic recombination and DNA repair, while the RuvA-RuvB complex plays an important role in the rescue of blocked DNA replication forks via replication fork reversal (RFR). RuvA specifically binds to HJ cruciform DNA, conferring on it an open structure. The RuvB hexamer acts as an ATP-dependent pump, pulling dsDNA into and through the RuvAB complex. RuvB forms 2 homohexamers on either side of HJ DNA bound by 1 or 2 RuvA tetramers; 4 subunits per hexamer contact DNA at a time. Coordinated motions by a converter formed by DNA-disengaged RuvB subunits stimulates ATP hydrolysis and nucleotide exchange. Immobilization of the converter enables RuvB to convert the ATP-contained energy into a lever motion, pulling 2 nucleotides of DNA out of the RuvA tetramer per ATP hydrolyzed, thus driving DNA branch migration. The RuvB motors rotate together with the DNA substrate, which together with the progressing nucleotide cycle form the mechanistic basis for DNA recombination by continuous HJ branch migration. Branch migration allows RuvC to scan DNA until it finds its consensus sequence, where it cleaves and resolves cruciform DNA. The protein is Holliday junction branch migration complex subunit RuvB of Haemophilus influenzae (strain PittEE).